The sequence spans 568 residues: Dihydroxy-acid dehydratase 1 (568 aa).

The segment at 1–22 is disordered; it reads MAEQTNTPDLKPRSRDVTDGLE. Positions 10–22 are enriched in basic and acidic residues; sequence LKPRSRDVTDGLE. Residue C57 coordinates [2Fe-2S] cluster. D89 contributes to the Mg(2+) binding site. C130 serves as a coordination point for [2Fe-2S] cluster. Mg(2+)-binding residues include D131 and K132. K132 is modified (N6-carboxylysine). C207 lines the [2Fe-2S] cluster pocket. E458 is a binding site for Mg(2+). S484 acts as the Proton acceptor in catalysis.

This sequence belongs to the IlvD/Edd family. As to quaternary structure, homodimer. Requires [2Fe-2S] cluster as cofactor. Mg(2+) serves as cofactor.

The enzyme catalyses (2R)-2,3-dihydroxy-3-methylbutanoate = 3-methyl-2-oxobutanoate + H2O. It carries out the reaction (2R,3R)-2,3-dihydroxy-3-methylpentanoate = (S)-3-methyl-2-oxopentanoate + H2O. Its pathway is amino-acid biosynthesis; L-isoleucine biosynthesis; L-isoleucine from 2-oxobutanoate: step 3/4. The protein operates within amino-acid biosynthesis; L-valine biosynthesis; L-valine from pyruvate: step 3/4. Its function is as follows. Functions in the biosynthesis of branched-chain amino acids. Catalyzes the dehydration of (2R,3R)-2,3-dihydroxy-3-methylpentanoate (2,3-dihydroxy-3-methylvalerate) into 2-oxo-3-methylpentanoate (2-oxo-3-methylvalerate) and of (2R)-2,3-dihydroxy-3-methylbutanoate (2,3-dihydroxyisovalerate) into 2-oxo-3-methylbutanoate (2-oxoisovalerate), the penultimate precursor to L-isoleucine and L-valine, respectively. The polypeptide is Dihydroxy-acid dehydratase 1 (Nocardia farcinica (strain IFM 10152)).